The sequence spans 1663 residues: MGPTSGPSLLLLLLTHLPLALGSPMYSIITPNILRLESEETMVLEAHDAQGDVPVTVTVHDFPGKKLVLSSEKTVLTPATNHMGNVTFTIPANREFKSEKGRNKFVTVQATFGTQVVEKVVLVSLQSGYLFIQTDKTIYTPGSTVLYRIFTVNHKLLPVGRTVMVNIENPEGIPVKQDSLSSQNQLGVLPLSWDIPELVNMGQWKIRAYYENSPQQVFSTEFEVKEYVLPSFEVIVEPTEKFYYIYNEKGLEVTITARFLYGKKVEGTAFVIFGIQDGEQRISLPESLKRIPIEDGSGEVVLSRKVLLDGVQNPRAEDLVGKSLYVSATVILHSGSDMVQAERSGIPIVTSPYQIHFTKTPKYFKPGMPFDLMVFVTNPDGSPAYRVPVAVQGEDTVQSLTQGDGVAKLSINTHPSQKPLSITVRTKKQELSEAEQATRTMQALPYSTVGNSNNYLHLSVLRTELRPGETLNVNFLLRMDRAHEAKIRYYTYLIMNKGRLLKAGRQVREPGQDLVVLPLSITTDFIPSFRLVAYYTLIGASGQREVVADSVWVDVKDSCVGSLVVKSGQSEDRQPVPGQQMTLKIEGDHGARVVLVAVDKGVFVLNKKNKLTQSKIWDVVEKADIGCTPGSGKDYAGVFSDAGLTFTSSSGQQTAQRAELQCPQPAARRRRSVQLTEKRMDKVGKYPKELRKCCEDGMRENPMRFSCQRRTRFISLGEACKKVFLDCCNYITELRRQHARASHLGLARSNLDEDIIAEENIVSRSEFPESWLWNVEDLKEPPKNGISTKLMNIFLKDSITTWEILAVSMSDKKGICVADPFEVTVMQDFFIDLRLPYSVVRNEQVEIRAVLYNYRQNQELKVRVELLHNPAFCSLATTKRRHQQTVTIPPKSSLSVPYVIVPLKTGLQEVEVKAAVYHHFISDGVRKSLKVVPEGIRMNKTVAVRTLDPERLGREGVQKEDIPPADLSDQVPDTESETRILLQGTPVAQMTEDAVDAERLKHLIVTPSGCGEQNMIGMTPTVIAVHYLDETEQWEKFGLEKRQGALELIKKGYTQQLAFRQPSSAFAAFVKRAPSTWLTAYVVKVFSLAVNLIAIDSQVLCGAVKWLILEKQKPDGVFQEDAPVIHQEMIGGLRNNNEKDMALTAFVLISLQEAKDICEEQVNSLPGSITKAGDFLEANYMNLQRSYTVAIAGYALAQMGRLKGPLLNKFLTTAKDKNRWEDPGKQLYNVEATSYALLALLQLKDFDFVPPVVRWLNEQRYYGGGYGSTQATFMVFQALAQYQKDAPDHQELNLDVSLQLPSRSSKITHRIHWESASLLRSEETKENEGFTVTAEGKGQGTLSVVTMYHAKAKDQLTCNKFDLKVTIKPAPETEKRPQDAKNTMILEICTRYRGDQDATMSILDISMMTGFAPDTDDLKQLANGVDRYISKYELDKAFSDRNTLIIYLDKVSHSEDDCLAFKVHQYFNVELIQPGAVKVYAYYNLEESCTRFYHPEKEDGKLNKLCRDELCRCAEENCFIQKSDDKVTLEERLDKACEPGVDYVYKTRLVKVQLSNDFDEYIMAIEQTIKSGSDEVQVGQQRTFISPIKCREALKLEEKKHYLMWGLSSDFWGEKPNLSYIIGKDTWVEHWPEEDECQDEENQKQCQDLGAFTESMVVFGCPN.

The first 22 residues, 1-22, serve as a signal peptide directing secretion; the sequence is MGPTSGPSLLLLLLTHLPLALG. Phosphoserine; by FAM20C occurs at positions 38 and 70. The N-linked (GlcNAc...) asparagine glycan is linked to Asn85. A phosphoserine; by FAM20C mark is found at Ser297 and Ser303. 13 disulfides stabilise this stretch: Cys559-Cys816, Cys627-Cys662, Cys693-Cys720, Cys694-Cys727, Cys707-Cys728, Cys873-Cys1513, Cys1101-Cys1158, Cys1358-Cys1489, Cys1389-Cys1458, Cys1506-Cys1511, Cys1518-Cys1590, Cys1537-Cys1661, and Cys1637-Cys1646. At Ser672 the chain carries Phosphoserine; by FAM20C. The 36-residue stretch at 693-728 folds into the Anaphylatoxin-like domain; that stretch reads CCEDGMRENPMRFSCQRRTRFISLGEACKKVFLDCC. Residue Asn939 is glycosylated (N-linked (GlcNAc...) asparagine). The disordered stretch occupies residues 954–973; sequence REGVQKEDIPPADLSDQVPD. Ser968 bears the Phosphoserine; by FAM20C mark. A cross-link (isoglutamyl cysteine thioester (Cys-Gln)) is located at residues 1010–1013; the sequence is CGEQ. Ser1321 carries the phosphoserine; by FAM20C modification. The region spanning 1518–1661 is the NTR domain; sequence CFIQKSDDKV…FTESMVVFGC (144 aa). Ser1573 is modified (phosphoserine; by FAM20C). Asn1617 carries an N-linked (GlcNAc...) asparagine glycan. Residues 1634–1659 are interaction with CFP/properdin; sequence EDECQDEENQKQCQDLGAFTESMVVF.

In absence of complement activation, the C3 precursor is first processed by the removal of 4 Arg residues, forming two chains, beta and alpha, linked by a disulfide bond. As to quaternary structure, complement C3b is composed of complement C3b and complement C3 beta chains that are associated via disulfide bonds. Non-enzymatic component of the C5 convertase, also named C4bC2bC3b, composed of the serine protease complement C2b (C2), complement C3b, as well as complement C4b (C4). Non-enzymatic component of the C5 convertase of the alternative complement pathways composed of the serine protease complement CFB and complement C3b. Interacts with CFP; interaction takes place together with CFB in the alternative complement system and allows the complex to become active. Interacts with CR1 (via Sushi 8 and Sushi 9 domains). Interacts with CFH. In terms of assembly, interacts with CFH. Interacts with CR2. During pregnancy, C3dg exists as a complex (probably a 2:2:2 heterohexamer) with AGT and the proform of PRG2. Interacts with CR2 (via the N-terminal Sushi domains 1 and 2). As to quaternary structure, (Microbial infection) C3b interacts with herpes simplex virus 1 (HHV-1) and herpes simplex virus 2 (HHV-2) envelope glycoprotein C; this interaction inhibits the activation of the complement system. In terms of assembly, (Microbial infection) Interacts with Staphylococcus aureus immunoglobulin-binding protein Sbi; this interaction prevents the association between C3dg and CR2. (Microbial infection) Interacts with Staphylococcus aureus protein Fib. Post-translationally, C3 precursor is first processed by the removal of 4 Arg residues, forming two chains, beta and alpha, linked by a disulfide bond. During activation of the complement systems, the alpha chain is cleaved into C3a and C3b by the C3 convertase: C3b stays linked to the beta chain, while C3a is released in the plasma. The alpha chain is cleaved by the serine protease complement C2b component of the C3 convertase to generate C3a and C3b following activation by the classical, lectin and GZMK complement systems. The alpha chain is cleaved by CFB component of the C3 convertase to generate C3a and C3b following activation by the alternative complement system. C3a is further processed by carboxypeptidases to release the C-terminal arginine residue generating the acylation stimulating protein (ASP). Levels of ASP are increased in adipocytes in the postprandial period and by insulin and dietary chylomicrons. In terms of processing, complement C3b is rapidly split in two positions by factor I (CFI) and a cofactor (CFH) to form iC3b (inactivated C3b) and C3f which is released. CFI and CFH catalyze proteolytic degradation of already-deposited complement C3b. Then iC3b is slowly cleaved (possibly by CFI) to form C3c (beta chain + alpha' chain fragment 1 + alpha' chain fragment 2), C3dg and C3f. Other proteases produce other fragments such as C3d or C3g. Post-translationally, upon activation, the internal thioester bond reacts with carbohydrate antigens on the target surface to form amide or ester bonds, leading to covalent association with the surface of pathogens. Complement C3b interacts with complement C4b via a thioester linkage. In terms of processing, phosphorylated by FAM20C in the extracellular medium. Post-translationally, (Microbial infection) C3 is cleaved by Staphylococcus aureus aureolysin; this cleavage renders C3a and C3b inactive. C3b is rapidly degraded by host factors CFH and CFI preventing its deposition on the bacterial surface while C3a is further inactivated by aureolysin. (Microbial infection) Complement C3 beta chain is cleaved and inactivated by S.pyogenes SpeB. In terms of processing, (Microbial infection) Cleaved by N.meningitidis NalP between Leu-744 and Gly-745, generating a slightly shorter C3 alpha form and a slightly longer C3 beta form. The C3b-like fragment is degraded in the presence of the complement regulators CFH and CFI, preventing its deposition on the bacterial surface. As to expression, plasma. In terms of tissue distribution, produced in adipocytes and released into the plasma during both the fasting and postprandial periods.

It localises to the secreted. The protein resides in the cell surface. Complement activation is inhibited by VSIG4. Its function is as follows. Precursor of non-enzymatic components of the classical, alternative, lectin and GZMK complement pathways, which consist in a cascade of proteins that leads to phagocytosis and breakdown of pathogens and signaling that strengthens the adaptive immune system. Non-enzymatic component of C5 convertase. Generated following cleavage by C3 convertase, it covalently attaches to the surface of pathogens, where it acts as an opsonin that marks the surface of antigens for removal. Complement C3b binds covalently via its reactive thioester, to cell surface carbohydrates or immune aggregates. Together with complement C4b, it then recruits the serine protease complement C2b to form the C5 convertase, which cleaves and activate C5, the next component of the complement pathways. In the alternative complement pathway, recruits the serine protease CFB to form the C5 convertase that cleaves and activates C5. In terms of biological role, mediator of local inflammatory process released following cleavage by C3 convertase. Acts by binding to its receptor, C3AR1, activating G protein-coupled receptor signaling, promoting the phosphorylation, ARRB2-mediated internalization and endocytosis of C3AR1. C3a anaphylatoxin stimulates the activation of immune cells such as mast cells and basophilic leukocytes to release inflammation agents, such as cytokines, chemokines and histamine, which promote inflammation development. Also acts as potent chemoattractant for the migration of macrophages and neutrophils to the inflamed tissues, resulting in neutralization of the inflammatory triggers by multiple ways, such as phagocytosis and generation of reactive oxidants. Functionally, adipogenic hormone that stimulates triglyceride synthesis and glucose transport in adipocytes, regulating fat storage and playing a role in postprandial triglyceride clearance. Appears to stimulate triglyceride synthesis via activation of the PLC, MAPK and AKT signaling pathways. Acts by binding to its receptor, C5AR2, activating G protein-coupled receptor signaling, promoting the phosphorylation, ARRB2-mediated internalization and endocytosis of C5AR2. Its function is as follows. Acts as a chemoattractant for neutrophils in chronic inflammation. The chain is Complement C3 from Homo sapiens (Human).